The primary structure comprises 274 residues: Pyrroline-5-carboxylate reductase 3 (274 aa).

Residue Ala2 is modified to N-acetylalanine.

The protein belongs to the pyrroline-5-carboxylate reductase family. As to quaternary structure, homodecamer; composed of 5 homodimers.

The protein resides in the cytoplasm. The catalysed reaction is L-proline + NADP(+) = (S)-1-pyrroline-5-carboxylate + NADPH + 2 H(+). It carries out the reaction L-proline + NAD(+) = (S)-1-pyrroline-5-carboxylate + NADH + 2 H(+). The protein operates within amino-acid biosynthesis; L-proline biosynthesis; L-proline from L-glutamate 5-semialdehyde: step 1/1. In terms of biological role, oxidoreductase that catalyzes the last step in proline biosynthesis, which corresponds to the reduction of pyrroline-5-carboxylate (P5C) to L-proline using NAD(P)H. Proline is synthesized from either glutamate or ornithine; both are converted to P5C, and then to proline via pyrroline-5-carboxylate reductases (PYCRs). PYCR3 is exclusively linked to the biosynthesis of proline from ornithine. This is Pyrroline-5-carboxylate reductase 3 from Mus musculus (Mouse).